The following is a 259-amino-acid chain: Deoxyribose-phosphate aldolase (259 aa).

Residue Asp-102 is the Proton donor/acceptor of the active site. Lys-167 (schiff-base intermediate with acetaldehyde) is an active-site residue. Lys-201 functions as the Proton donor/acceptor in the catalytic mechanism.

This sequence belongs to the DeoC/FbaB aldolase family. DeoC type 2 subfamily.

The protein resides in the cytoplasm. It carries out the reaction 2-deoxy-D-ribose 5-phosphate = D-glyceraldehyde 3-phosphate + acetaldehyde. The protein operates within carbohydrate degradation; 2-deoxy-D-ribose 1-phosphate degradation; D-glyceraldehyde 3-phosphate and acetaldehyde from 2-deoxy-alpha-D-ribose 1-phosphate: step 2/2. Its function is as follows. Catalyzes a reversible aldol reaction between acetaldehyde and D-glyceraldehyde 3-phosphate to generate 2-deoxy-D-ribose 5-phosphate. The protein is Deoxyribose-phosphate aldolase of Escherichia coli O8 (strain IAI1).